The sequence spans 380 residues: Protein Wnt-5a (380 aa).

Residues 1 to 40 (MRKNLWTFQFGGEASGLVGSAMVSQHFVVLLMSLYCLTQS) form the signal peptide. Cysteine 104 and cysteine 115 are disulfide-bonded. N-linked (GlcNAc...) asparagine glycans are attached at residues asparagine 114 and asparagine 120. Disulfide bonds link cysteine 154–cysteine 162, cysteine 164–cysteine 182, cysteine 238–cysteine 252, cysteine 240–cysteine 247, cysteine 309–cysteine 340, cysteine 325–cysteine 335, cysteine 339–cysteine 379, cysteine 355–cysteine 370, cysteine 357–cysteine 367, and cysteine 362–cysteine 363. The O-palmitoleoyl serine; by PORCN moiety is linked to residue serine 244. Residues asparagine 312 and asparagine 326 are each glycosylated (N-linked (GlcNAc...) asparagine).

The protein belongs to the Wnt family. Post-translationally, palmitoleoylation is required for efficient binding to frizzled receptors. Depalmitoleoylation leads to Wnt signaling pathway inhibition. Found primarily in ectoderm with lower levels of expression in mesoderm. Detected in the head and tail with lower expression in the middle of the embryo. No expression was found in the notochord.

The protein localises to the secreted. It is found in the extracellular space. The protein resides in the extracellular matrix. In terms of biological role, ligand for members of the frizzled family of seven transmembrane receptors. Can activate or inhibit canonical Wnt signaling, depending on receptor context. Plays a role in normal embryonic development. In Xenopus laevis (African clawed frog), this protein is Protein Wnt-5a (wnt5a).